Reading from the N-terminus, the 440-residue chain is UDP-N-acetylmuramoylalanine--D-glutamate ligase (440 aa).

Position 115-121 (115-121) interacts with ATP; the sequence is GSNGKST.

This sequence belongs to the MurCDEF family.

It is found in the cytoplasm. It catalyses the reaction UDP-N-acetyl-alpha-D-muramoyl-L-alanine + D-glutamate + ATP = UDP-N-acetyl-alpha-D-muramoyl-L-alanyl-D-glutamate + ADP + phosphate + H(+). It functions in the pathway cell wall biogenesis; peptidoglycan biosynthesis. In terms of biological role, cell wall formation. Catalyzes the addition of glutamate to the nucleotide precursor UDP-N-acetylmuramoyl-L-alanine (UMA). The chain is UDP-N-acetylmuramoylalanine--D-glutamate ligase from Aliivibrio fischeri (strain MJ11) (Vibrio fischeri).